Reading from the N-terminus, the 511-residue chain is MDGMHMNSTGDNPIEIDFENYANHMNKFLMAHIICMIIAYVFILPAGIVLAMAKSKAHIPVQIVYVILTLIGYIFAHISHHKASPENYYKGNIHRPVGRFFMWITFLIAIVGITTSILKKRMLKEYQPAAEAPGAMEDPEQALQRNSLDDGAPLLPREGNSSDEYLPPQSSRRDVSSEKPSIPSISFINIRSWRTIPKKWCVLQVLRYFHRILGHLWLYVGFFESCTGIVLLAGIFKGQHIFNGLAHWIKGAIFLWYGILSFGEYLGAFSEYGWAWNVVPKQLSEKRFAKYVPTKEMVESFLLFAYGVSNVWLEHLGNTDGKWNHHDLQHASLAFMLWWAGLCGILVESKVVHRLLNATLSATLGQRRSEDSEHSENGLPSYNVFPALTVFFTGIMMSAHDQTNHVSTVIHVLWGRLLAAAAIARICTYIMLYLKPPSSPWPTRPPTEIITSFCLICGGAMFMASSYDVVNKIRLNEMSPMLIMNISVAFTCIVMGLEVMFLILKGYASSR.

The next 3 helical transmembrane spans lie at 33–53 (IICM…LAMA), 59–79 (IPVQ…AHIS), and 97–117 (VGRF…TTSI). 3 positions are modified to phosphoserine: S147, S161, and S162. Residues 157–180 (REGNSSDEYLPPQSSRRDVSSEKP) are disordered. Helical transmembrane passes span 216 to 236 (LWLY…AGIF), 249 to 269 (IKGA…LGAF), 297 to 317 (MVES…EHLG), 332 to 352 (SLAF…SKVV), 412 to 432 (VLWG…YIML), 449 to 469 (IITS…SYDV), and 483 to 503 (IMNI…MFLI).

The protein to yeast YCR061W.

The protein localises to the endoplasmic reticulum membrane. This is an uncharacterized protein from Schizosaccharomyces pombe (strain 972 / ATCC 24843) (Fission yeast).